The chain runs to 89 residues: Small ribosomal subunit protein uS15 (89 aa).

Residues 1 to 10 (MPLNTEKKQE) show a composition bias toward basic and acidic residues. A disordered region spans residues 1–22 (MPLNTEKKQELINSHQTHATDT). The span at 11–22 (LINSHQTHATDT) shows a compositional bias: polar residues.

Belongs to the universal ribosomal protein uS15 family. Part of the 30S ribosomal subunit. Forms a bridge to the 50S subunit in the 70S ribosome, contacting the 23S rRNA.

One of the primary rRNA binding proteins, it binds directly to 16S rRNA where it helps nucleate assembly of the platform of the 30S subunit by binding and bridging several RNA helices of the 16S rRNA. Functionally, forms an intersubunit bridge (bridge B4) with the 23S rRNA of the 50S subunit in the ribosome. The protein is Small ribosomal subunit protein uS15 of Synechococcus sp. (strain RCC307).